The chain runs to 291 residues: uncharacterized protein (291 aa).

This sequence to E.cuniculi ECU03_0120.

This is an uncharacterized protein from Encephalitozoon cuniculi (strain GB-M1) (Microsporidian parasite).